The following is a 139-amino-acid chain: Endoribonuclease YbeY (139 aa).

The Zn(2+) site is built by His110, His114, and His120.

Belongs to the endoribonuclease YbeY family. It depends on Zn(2+) as a cofactor.

It is found in the cytoplasm. Functionally, single strand-specific metallo-endoribonuclease involved in late-stage 70S ribosome quality control and in maturation of the 3' terminus of the 16S rRNA. This Thermus thermophilus (strain ATCC BAA-163 / DSM 7039 / HB27) protein is Endoribonuclease YbeY.